The primary structure comprises 257 residues: Aspartate/glutamate leucyltransferase (257 aa).

The protein belongs to the R-transferase family. Bpt subfamily.

It is found in the cytoplasm. The catalysed reaction is N-terminal L-glutamyl-[protein] + L-leucyl-tRNA(Leu) = N-terminal L-leucyl-L-glutamyl-[protein] + tRNA(Leu) + H(+). It carries out the reaction N-terminal L-aspartyl-[protein] + L-leucyl-tRNA(Leu) = N-terminal L-leucyl-L-aspartyl-[protein] + tRNA(Leu) + H(+). Its function is as follows. Functions in the N-end rule pathway of protein degradation where it conjugates Leu from its aminoacyl-tRNA to the N-termini of proteins containing an N-terminal aspartate or glutamate. This Rhodopseudomonas palustris (strain BisB5) protein is Aspartate/glutamate leucyltransferase.